The sequence spans 143 residues: Regulator of ribonuclease activity B (143 aa).

A compositionally biased stretch (acidic residues) spans 117–135 (DPDAEYDDEDGENEDDESE). The tract at residues 117–143 (DPDAEYDDEDGENEDDESESDKSSRLH) is disordered.

The protein belongs to the RraB family. As to quaternary structure, interacts with the C-terminal region of Rne.

It localises to the cytoplasm. Functionally, globally modulates RNA abundance by binding to RNase E (Rne) and regulating its endonucleolytic activity. Can modulate Rne action in a substrate-dependent manner by altering the composition of the degradosome. This is Regulator of ribonuclease activity B from Proteus mirabilis (strain HI4320).